Here is a 217-residue protein sequence, read N- to C-terminus: Protein 33K (217 aa).

Residues 1 to 142 (MPPKGNKQAI…KEKTSAIATR (142 aa)) form a disordered region. Residues 24–68 (QWDEEEESWDDSQAEEVSDEEEMESWESLDEELEDKPPKDEEEEI) are compositionally biased toward acidic residues. Over residues 69-78 (IASAAAPSSK) the composition is skewed to low complexity. Over residues 123–136 (KRSEKTTRPRKEKT) the composition is skewed to basic and acidic residues. Positions 160 to 187 (YAIFQQSRGQQLELKVKNRSLRSLTRSC) are necessary for nuclear subcellular location. The tract at residues 166–186 (SRGQQLELKVKNRSLRSLTRS) is RS-repeat; required for splicing enhancer activity.

Belongs to the adenoviridae splicing factor family. Homooligomer. Interacts with DBP; this interaction occurs at a unique vertex during genome packaging. Interacts with IVa2; this interaction occurs at a unique vertex during genome packaging and seems to potentiate IVa2 and 33K oligomerization. Phosphorylated in vitro by human PKA and PRKDC. PRKDC inhibits, whereas PKA activates the splicing factor.

It is found in the host nucleus. Functionally, promotes alternative splicing of late transcripts by promoting splicing at weak 3' splice sites. Required for the temporal activation of major late pre-mRNA splicing at late times of infection. Induces the splicing and expression of the late capsid vertex protein. Its function is as follows. Probably functions as the small terminase that is part of the molecular motor that translocates genomic DNA in empty capsid during DNA packaging. This motor is located at a unique vertex and comprises at least the IVa2 ATPase, the small terminase 33K and probably a portal. Forms a ring-like structure of about 17 nm in which genomic DNA is translocated into the capsid. Stimulates IVa2 ATPase activity in the presence of the viral genome. Once the DNA is packaged, the terminase detaches: the 33K protein is present in the empty particles, but not in the mature virions. Also involved in virion assembly. The chain is Protein 33K from Human adenovirus F serotype 41 (HAdV-41).